The primary structure comprises 123 residues: Large ribosomal subunit protein bL21 (123 aa).

The protein belongs to the bacterial ribosomal protein bL21 family. As to quaternary structure, part of the 50S ribosomal subunit. Contacts protein L20.

Its function is as follows. This protein binds to 23S rRNA in the presence of protein L20. The polypeptide is Large ribosomal subunit protein bL21 (Sinorhizobium fredii (strain NBRC 101917 / NGR234)).